The primary structure comprises 349 residues: Nicotinate-nucleotide--dimethylbenzimidazole phosphoribosyltransferase (349 aa).

Residue Glu316 is the Proton acceptor of the active site.

This sequence belongs to the CobT family.

It carries out the reaction 5,6-dimethylbenzimidazole + nicotinate beta-D-ribonucleotide = alpha-ribazole 5'-phosphate + nicotinate + H(+). The protein operates within nucleoside biosynthesis; alpha-ribazole biosynthesis; alpha-ribazole from 5,6-dimethylbenzimidazole: step 1/2. Catalyzes the synthesis of alpha-ribazole-5'-phosphate from nicotinate mononucleotide (NAMN) and 5,6-dimethylbenzimidazole (DMB). The polypeptide is Nicotinate-nucleotide--dimethylbenzimidazole phosphoribosyltransferase (Photorhabdus laumondii subsp. laumondii (strain DSM 15139 / CIP 105565 / TT01) (Photorhabdus luminescens subsp. laumondii)).